Consider the following 355-residue polypeptide: Electron transfer flavoprotein subunit alpha, mitochondrial (355 aa).

FAD is bound at residue 295–323 (LYIAVGISGAIQHLAGMKDSKVIVAINKD).

The protein belongs to the ETF alpha-subunit/FixB family. As to quaternary structure, heterodimer of an alpha and a beta subunit. It depends on FAD as a cofactor.

It localises to the mitochondrion matrix. Functionally, the electron transfer flavoprotein serves as a specific electron acceptor for several dehydrogenases, including five acyl-CoA dehydrogenases, glutaryl-CoA and sarcosine dehydrogenase. It transfers the electrons to the main mitochondrial respiratory chain via ETF-ubiquinone oxidoreductase (ETF dehydrogenase). This is Electron transfer flavoprotein subunit alpha, mitochondrial (etfa) from Dictyostelium discoideum (Social amoeba).